Reading from the N-terminus, the 567-residue chain is 2-succinyl-5-enolpyruvyl-6-hydroxy-3-cyclohexene-1-carboxylate synthase (567 aa).

This sequence belongs to the TPP enzyme family. MenD subfamily. Homodimer. Mg(2+) serves as cofactor. Mn(2+) is required as a cofactor. It depends on thiamine diphosphate as a cofactor.

It catalyses the reaction isochorismate + 2-oxoglutarate + H(+) = 5-enolpyruvoyl-6-hydroxy-2-succinyl-cyclohex-3-ene-1-carboxylate + CO2. It functions in the pathway quinol/quinone metabolism; 1,4-dihydroxy-2-naphthoate biosynthesis; 1,4-dihydroxy-2-naphthoate from chorismate: step 2/7. It participates in quinol/quinone metabolism; menaquinone biosynthesis. Its function is as follows. Catalyzes the thiamine diphosphate-dependent decarboxylation of 2-oxoglutarate and the subsequent addition of the resulting succinic semialdehyde-thiamine pyrophosphate anion to isochorismate to yield 2-succinyl-5-enolpyruvyl-6-hydroxy-3-cyclohexene-1-carboxylate (SEPHCHC). This is 2-succinyl-5-enolpyruvyl-6-hydroxy-3-cyclohexene-1-carboxylate synthase from Yersinia pestis bv. Antiqua (strain Antiqua).